The chain runs to 167 residues: MSHKQGGHKTKGLVFPSNWTGKWLYRAIINTPKWQLNSVLNSYKFNQWIAFESMQLNGLQLSPRVSPETNFIRSVEVGIAVSEAGKQYESVPHKVPLEDKVRLLKEELEVPIIGDMVRSMTQAVLPGPMPVMYPNTAEVETPVEIKGKEIPIEFKEEGKEIPVMAVG.

This is an uncharacterized protein from Acidianus bottle-shaped virus (isolate Italy/Pozzuoli) (ABV).